A 344-amino-acid polypeptide reads, in one-letter code: Aspartate-semialdehyde dehydrogenase (344 aa).

Residues 10-13 (TGQV) and 38-39 (RS) each bind NADP(+). R101 is a binding site for phosphate. C131 acts as the Acyl-thioester intermediate in catalysis. Substrate is bound at residue Q158. Residue 161–162 (SG) participates in NADP(+) binding. A phosphate-binding site is contributed by K228. R250 lines the substrate pocket. The active-site Proton acceptor is H257. An NADP(+)-binding site is contributed by N326.

This sequence belongs to the aspartate-semialdehyde dehydrogenase family. In terms of assembly, homodimer.

It carries out the reaction L-aspartate 4-semialdehyde + phosphate + NADP(+) = 4-phospho-L-aspartate + NADPH + H(+). It functions in the pathway amino-acid biosynthesis; L-lysine biosynthesis via DAP pathway; (S)-tetrahydrodipicolinate from L-aspartate: step 2/4. The protein operates within amino-acid biosynthesis; L-methionine biosynthesis via de novo pathway; L-homoserine from L-aspartate: step 2/3. It participates in amino-acid biosynthesis; L-threonine biosynthesis; L-threonine from L-aspartate: step 2/5. Catalyzes the NADPH-dependent formation of L-aspartate-semialdehyde (L-ASA) by the reductive dephosphorylation of L-aspartyl-4-phosphate. The protein is Aspartate-semialdehyde dehydrogenase of Corynebacterium melassecola.